The primary structure comprises 305 residues: MAAFTPQWNDWCPGCGNFGILNAEQQAIVELGVDTKNVVVVSGIGCSGKIPHFFRTPISGVHTLHGRAIAFATGIKLSNPDLVVIVNGGDGDLLGIGAGHFVAAGRRNVDMVVILHDNGVYGLTKGQASPTLKRGEKPKSLPRPNINDAVNPIALAISSGYTFVARGYAYDVKHLKELIKSAIKHKGLALIDVLQPCPTYNDINTKEWYDKRIYKLDTLPDWDPVVKKPEEVNEKIKRAIDKSLEWGDRIPIGIFYQNELVPSYEERIKANSPAYLDYTPAKQLIEKEGKLTTIIDPLLKEREVD.

Residues Cys-12, Cys-15, and Cys-46 each contribute to the [4Fe-4S] cluster site. Thiamine diphosphate-binding positions include 44 to 47 (IGCS) and His-65. Position 90 (Asp-90) interacts with Mg(2+). Residue 91-92 (GD) coordinates thiamine diphosphate. Asn-118 and Val-120 together coordinate Mg(2+). Residue 122–123 (GL) participates in thiamine diphosphate binding. Cys-197 serves as a coordination point for [4Fe-4S] cluster.

As to quaternary structure, heterodimer composed of an alpha and a beta subunit. Requires [4Fe-4S] cluster as cofactor. It depends on thiamine diphosphate as a cofactor. The cofactor is Mg(2+).

It localises to the cytoplasm. The enzyme catalyses a 2-oxocarboxylate + 2 oxidized [2Fe-2S]-[ferredoxin] + CoA = an acyl-CoA + 2 reduced [2Fe-2S]-[ferredoxin] + CO2 + H(+). Catalyzes the coenzyme A-dependent oxidative decarboxylation of different 2-oxoacids such as 2-oxoglutarate, pyruvate and 2-oxobutyrate to form their CoA derivatives. This Sulfolobus sp protein is 2-oxoacid:ferredoxin oxidoreductase subunit beta.